The sequence spans 67 residues: DNA-directed RNA polymerase subunit omega (67 aa).

It belongs to the RNA polymerase subunit omega family. The RNAP catalytic core consists of 2 alpha, 1 beta, 1 beta' and 1 omega subunit. When a sigma factor is associated with the core the holoenzyme is formed, which can initiate transcription.

The catalysed reaction is RNA(n) + a ribonucleoside 5'-triphosphate = RNA(n+1) + diphosphate. Promotes RNA polymerase assembly. Latches the N- and C-terminal regions of the beta' subunit thereby facilitating its interaction with the beta and alpha subunits. The chain is DNA-directed RNA polymerase subunit omega from Listeria monocytogenes serotype 4b (strain F2365).